We begin with the raw amino-acid sequence, 256 residues long: Low molecular mass lipoprotein 3 (256 aa).

The signal sequence occupies residues 1 to 17 (MKPAIVILCLFVASLYA).

This sequence belongs to the 30 kDa lipoprotein family. In terms of tissue distribution, detected in larval hemolymph (at protein level).

The protein localises to the secreted. This is Low molecular mass lipoprotein 3 from Bombyx mori (Silk moth).